The chain runs to 61 residues: Metallothionein-1 (61 aa).

Met-1 is modified (N-acetylmethionine). The beta stretch occupies residues 1 to 29 (MDPNCSCPTGGSCTCAGSCKCKACRCPSC). 20 residues coordinate a divalent metal cation: Cys-5, Cys-7, Cys-13, Cys-15, Cys-19, Cys-21, Cys-24, Cys-26, Cys-29, Cys-33, Cys-34, Cys-36, Cys-37, Cys-41, Cys-44, Cys-48, Cys-50, Cys-57, Cys-59, and Cys-60. Residues 30–61 (KKSCCSCCPVGCAKCAQGCVCKGASDKCSCCA) are alpha.

The protein belongs to the metallothionein superfamily. Type 1 family. In terms of assembly, monomer.

Its function is as follows. Metallothioneins have a high content of cysteine residues that bind various heavy metals; these proteins are transcriptionally regulated by both heavy metals and glucocorticoids. This is Metallothionein-1 (MT1) from Bos taurus (Bovine).